Consider the following 402-residue polypeptide: Succinylornithine transaminase (402 aa).

An N6-(pyridoxal phosphate)lysine modification is found at lysine 252.

It belongs to the class-III pyridoxal-phosphate-dependent aminotransferase family. AstC subfamily. The cofactor is pyridoxal 5'-phosphate.

It carries out the reaction N(2)-succinyl-L-ornithine + 2-oxoglutarate = N-succinyl-L-glutamate 5-semialdehyde + L-glutamate. Its pathway is amino-acid degradation; L-arginine degradation via AST pathway; L-glutamate and succinate from L-arginine: step 3/5. Catalyzes the transamination of N(2)-succinylornithine and alpha-ketoglutarate into N(2)-succinylglutamate semialdehyde and glutamate. Can also act as an acetylornithine aminotransferase. The protein is Succinylornithine transaminase of Photorhabdus laumondii subsp. laumondii (strain DSM 15139 / CIP 105565 / TT01) (Photorhabdus luminescens subsp. laumondii).